The primary structure comprises 203 residues: GTP cyclohydrolase-2 (203 aa).

49-53 (RIHSE) lines the GTP pocket. Zn(2+) contacts are provided by Cys54, Cys65, and Cys67. Residues Gln70, 92-94 (EGR), and Thr114 each bind GTP. Catalysis depends on Asp126, which acts as the Proton acceptor. Residue Arg128 is the Nucleophile of the active site. Residues Thr149 and Lys154 each contribute to the GTP site.

The protein belongs to the GTP cyclohydrolase II family. It depends on Zn(2+) as a cofactor.

The catalysed reaction is GTP + 4 H2O = 2,5-diamino-6-hydroxy-4-(5-phosphoribosylamino)-pyrimidine + formate + 2 phosphate + 3 H(+). The protein operates within cofactor biosynthesis; riboflavin biosynthesis; 5-amino-6-(D-ribitylamino)uracil from GTP: step 1/4. Functionally, catalyzes the conversion of GTP to 2,5-diamino-6-ribosylamino-4(3H)-pyrimidinone 5'-phosphate (DARP), formate and pyrophosphate. This is GTP cyclohydrolase-2 from Shewanella sp. (strain MR-4).